Here is a 442-residue protein sequence, read N- to C-terminus: NADH-quinone oxidoreductase subunit D (442 aa).

This sequence belongs to the complex I 49 kDa subunit family. As to quaternary structure, NDH-1 is composed of 14 different subunits. Subunits NuoB, C, D, E, F, and G constitute the peripheral sector of the complex.

The protein resides in the cell membrane. It carries out the reaction a quinone + NADH + 5 H(+)(in) = a quinol + NAD(+) + 4 H(+)(out). In terms of biological role, NDH-1 shuttles electrons from NADH, via FMN and iron-sulfur (Fe-S) centers, to quinones in the respiratory chain. The immediate electron acceptor for the enzyme in this species is believed to be a menaquinone. Couples the redox reaction to proton translocation (for every two electrons transferred, four hydrogen ions are translocated across the cytoplasmic membrane), and thus conserves the redox energy in a proton gradient. The sequence is that of NADH-quinone oxidoreductase subunit D from Mycolicibacterium smegmatis (strain ATCC 700084 / mc(2)155) (Mycobacterium smegmatis).